A 182-amino-acid polypeptide reads, in one-letter code: Transcription repressor OFP11 (182 aa).

The disordered stretch occupies residues P62–S94. In terms of domain architecture, OVATE spans M104–W169.

In terms of tissue distribution, expressed in roots, rosette and cauline leaves, shoots, stems, flower buds and siliques.

It localises to the nucleus. In terms of biological role, transcriptional repressor that may regulate multiple aspects of plant growth and development through the regulation of BEL1-LIKE (BLH) and KNOX TALE (KNAT) homeodomain transcription factors. The chain is Transcription repressor OFP11 (OFP11) from Arabidopsis thaliana (Mouse-ear cress).